The following is a 221-amino-acid chain: Eukaryotic translation initiation factor 3 subunit K (221 aa).

The region spanning 46–207 (YDLEANLACL…NIKTKHITEK (162 aa)) is the PCI domain.

This sequence belongs to the eIF-3 subunit K family. Component of the eukaryotic translation initiation factor 3 (eIF-3) complex.

It is found in the cytoplasm. Functionally, component of the eukaryotic translation initiation factor 3 (eIF-3) complex, which is involved in protein synthesis of a specialized repertoire of mRNAs and, together with other initiation factors, stimulates binding of mRNA and methionyl-tRNAi to the 40S ribosome. The eIF-3 complex specifically targets and initiates translation of a subset of mRNAs involved in cell proliferation. This Culex quinquefasciatus (Southern house mosquito) protein is Eukaryotic translation initiation factor 3 subunit K.